The primary structure comprises 224 residues: MAKSGKKYLQALSKVNKLKSYNIDDAISLLKEIKFVKFDETIDVSVNLNLKKNHTVRETLVLPHQFMKEKRILVFAKGEKAEEAREFGAAYVGDDDLINKIKDGFSDFDVVVATPDMMKDVGKLGPILGKRGLMPNPKTQTITNDLKGTIASLKKGRTEFRANKNGVINFSVGKSSMDSKKIRENYDEFIKELLKRRPSDLKGTFVDSVYVSSTMGPSVKIDFV.

It belongs to the universal ribosomal protein uL1 family. As to quaternary structure, part of the 50S ribosomal subunit.

Its function is as follows. Binds directly to 23S rRNA. The L1 stalk is quite mobile in the ribosome, and is involved in E site tRNA release. Protein L1 is also a translational repressor protein, it controls the translation of the L11 operon by binding to its mRNA. The sequence is that of Large ribosomal subunit protein uL1 from Borrelia duttonii (strain Ly).